The chain runs to 485 residues: Shutoff alkaline exonuclease (485 aa).

Belongs to the herpesviridae alkaline nuclease family. As to quaternary structure, forms a complex with the DNA polymerase, the DNA polymerase processivity factor, and the major DNA binding protein.

It localises to the host nucleus. The protein localises to the host cytoplasm. Functionally, plays a role in processing non linear or branched viral DNA intermediates in order to promote the production of mature packaged unit-length linear progeny viral DNA molecules. Exhibits endonuclease and exonuclease activities and accepts both double-stranded and single-stranded DNA as substrate. Exonuclease digestion of DNA is in the 5'-&gt; 3' direction and the products are 5'-monophosphate nucleosides. Additionally, forms a recombinase with the major DNA-binding protein, which displays strand exchange activity. Also acts as a cytoplasmic RNA endonuclease that induces degradation of the majority of the cellular messenger RNAs during early lytic infection. The resulting inhibition of cellular protein synthesis serves to ensure maximal viral gene expression and evasion from host immune response. Internally cleaves host mRNAs which are then degraded by the cellular exonuclease XRN1. Bypasses therefore the regulatory steps of deadenylation and decapping normally required for XRN1 activation. The polypeptide is Shutoff alkaline exonuclease (37) (Alcelaphine herpesvirus 1 (strain C500) (AlHV-1)).